The following is a 454-amino-acid chain: F-box/WD repeat-containing protein 2 (454 aa).

Residues 54–101 (RDFLKLLPLELSFYLLKWLDPQTLLTCCLVSKQWNKVISACTEVWQTA) enclose the F-box domain. WD repeat units follow at residues 146 to 183 (GHSA…CVYG), 185 to 221 (QTHT…RTQH), 224 to 265 (GHTG…NTLT), and 276 to 314 (LQQC…NCKC). N6-acetyllysine is present on lysine 298.

Directly interacts with SKP1 and CUL1.

In terms of biological role, substrate-recognition component of the SCF (SKP1-CUL1-F-box protein)-type E3 ubiquitin ligase complex. The protein is F-box/WD repeat-containing protein 2 of Rattus norvegicus (Rat).